Consider the following 576-residue polypeptide: F-actin capping regulator BSP1 (576 aa).

A disordered region spans residues 24–50; the sequence is RYSNIPSSKPAGEALSPVRSHNSGEYR. Phosphoserine is present on residues Ser-46, Ser-79, and Ser-88. Disordered stretches follow at residues 132–160 and 173–316; these read NDSNADKNLPSFEKGPRMPSRGRPRPREK and GRAD…KRIP. Ser-185 carries the post-translational modification Phosphoserine. Over residues 191–206 the composition is skewed to basic and acidic residues; that stretch reads TRRDHIKITDGNEEKP. Ser-220 carries the phosphoserine modification. Composition is skewed to polar residues over residues 243-255 and 264-279; these read SRSTKPASFLSSL and KSYNSEMETPKTTVKS. The segment covering 304-313 has biased composition (pro residues); sequence KPTPPSPPAK. Residues Ser-309 and Ser-320 each carry the phosphoserine modification. Positions 408–470 are interaction with F-actin; that stretch reads SIPEAIKGIQ…LSLRNNLKKR (63 aa). Residues 541 to 576 form a disordered region; that stretch reads DKYTTSRDETVKETKPLVHPNKNRTRGPRRKLPTRV. Residues 544–556 are compositionally biased toward basic and acidic residues; the sequence is TTSRDETVKETKP. The interval 547 to 576 is interaction with the F-actin capping complex; the sequence is RDETVKETKPLVHPNKNRTRGPRRKLPTRV. Basic residues predominate over residues 561 to 576; it reads NKNRTRGPRRKLPTRV.

In terms of assembly, interacts (via C-terminus) with the CAP1-CAP2 F-actin capping protein complex. Interacts with INP52 (via SAC domain); the interaction is direct. Interacts with INP53 (via SAC domain); the interaction is direct. Interacts with RVS167. Interacts with SLA1. Phosphorylated by CDC28.

The protein localises to the cytoplasm. The protein resides in the cytoskeleton. It localises to the actin patch. It is found in the cell membrane. Its function is as follows. Recruits the capping protein complex to actin patches and the actomyosin contractile ring, and/or stabilizes their interaction. May serve as an adapter to link INP52 and INP53 to the cortical actin cytoskeleton. Binds F-actin. The sequence is that of F-actin capping regulator BSP1 (BSP1) from Saccharomyces cerevisiae (strain ATCC 204508 / S288c) (Baker's yeast).